The sequence spans 82 residues: Ferredoxin (82 aa).

One can recognise a 4Fe-4S ferredoxin-type domain in the interval 3–31 (KYTIVDKDTCIACGACGAAAPDIYDYDDE). The [4Fe-4S] cluster site is built by cysteine 12, cysteine 15, cysteine 18, and cysteine 62.

Requires [4Fe-4S] cluster as cofactor.

Functionally, ferredoxins are iron-sulfur proteins that transfer electrons in a wide variety of metabolic reactions. This ferredoxin may act as a phosphodonor to cytochrome P450 BioI. The sequence is that of Ferredoxin (fer) from Bacillus subtilis (strain 168).